A 255-amino-acid chain; its full sequence is Probable transcriptional regulator ycf27 (255 aa).

One can recognise a Response regulatory domain in the interval 9-122; sequence KILIADDESS…ELEARIRCVL (114 aa). Asp58 carries the post-translational modification 4-aspartylphosphate. The H-T-H motif DNA-binding region spans 78-96; the sequence is DIPIIMLTALGDVTDRITG. A DNA-binding region (ompR/PhoB-type) is located at residues 137–238; it reads SGIINIGFLK…SRGTGYLFQR (102 aa).

Its subcellular location is the plastid. It localises to the chloroplast. In terms of biological role, probable promoter-specific protein mediating the interaction between DNA and RNA polymerase. The protein is Probable transcriptional regulator ycf27 (ycf27) of Galdieria sulphuraria (Red alga).